Here is a 408-residue protein sequence, read N- to C-terminus: LL-diaminopimelate aminotransferase (408 aa).

Substrate-binding residues include Tyr15 and Gly42. Residues Tyr72, Ser108–Lys109, Tyr132, Asn187, Tyr218, and Ser246–Ser248 contribute to the pyridoxal 5'-phosphate site. Substrate-binding residues include Lys109, Tyr132, and Asn187. Lys249 carries the post-translational modification N6-(pyridoxal phosphate)lysine. Pyridoxal 5'-phosphate is bound by residues Arg257 and Asn292. Substrate-binding residues include Asn292 and Arg388.

Belongs to the class-I pyridoxal-phosphate-dependent aminotransferase family. LL-diaminopimelate aminotransferase subfamily. In terms of assembly, homodimer. It depends on pyridoxal 5'-phosphate as a cofactor.

The enzyme catalyses (2S,6S)-2,6-diaminopimelate + 2-oxoglutarate = (S)-2,3,4,5-tetrahydrodipicolinate + L-glutamate + H2O + H(+). It participates in amino-acid biosynthesis; L-lysine biosynthesis via DAP pathway; LL-2,6-diaminopimelate from (S)-tetrahydrodipicolinate (aminotransferase route): step 1/1. Involved in the synthesis of meso-diaminopimelate (m-DAP or DL-DAP), required for both lysine and peptidoglycan biosynthesis. Catalyzes the direct conversion of tetrahydrodipicolinate to LL-diaminopimelate. The protein is LL-diaminopimelate aminotransferase of Leptospira biflexa serovar Patoc (strain Patoc 1 / Ames).